The sequence spans 380 residues: Lipid-A-disaccharide synthase (380 aa).

The protein belongs to the LpxB family.

It carries out the reaction a lipid X + a UDP-2-N,3-O-bis[(3R)-3-hydroxyacyl]-alpha-D-glucosamine = a lipid A disaccharide + UDP + H(+). Its pathway is bacterial outer membrane biogenesis; LPS lipid A biosynthesis. In terms of biological role, condensation of UDP-2,3-diacylglucosamine and 2,3-diacylglucosamine-1-phosphate to form lipid A disaccharide, a precursor of lipid A, a phosphorylated glycolipid that anchors the lipopolysaccharide to the outer membrane of the cell. The polypeptide is Lipid-A-disaccharide synthase (Rickettsia typhi (strain ATCC VR-144 / Wilmington)).